Reading from the N-terminus, the 208-residue chain is Protein-L-isoaspartate O-methyltransferase (208 aa).

The active site involves serine 59.

This sequence belongs to the methyltransferase superfamily. L-isoaspartyl/D-aspartyl protein methyltransferase family.

The protein resides in the cytoplasm. The catalysed reaction is [protein]-L-isoaspartate + S-adenosyl-L-methionine = [protein]-L-isoaspartate alpha-methyl ester + S-adenosyl-L-homocysteine. Its function is as follows. Catalyzes the methyl esterification of L-isoaspartyl residues in peptides and proteins that result from spontaneous decomposition of normal L-aspartyl and L-asparaginyl residues. It plays a role in the repair and/or degradation of damaged proteins. The protein is Protein-L-isoaspartate O-methyltransferase of Salmonella paratyphi A (strain ATCC 9150 / SARB42).